The chain runs to 122 residues: Large ribosomal subunit protein uL14 (122 aa).

It belongs to the universal ribosomal protein uL14 family. In terms of assembly, part of the 50S ribosomal subunit. Forms a cluster with proteins L3 and L19. In the 70S ribosome, L14 and L19 interact and together make contacts with the 16S rRNA in bridges B5 and B8.

Its function is as follows. Binds to 23S rRNA. Forms part of two intersubunit bridges in the 70S ribosome. This chain is Large ribosomal subunit protein uL14, found in Streptococcus equi subsp. equi (strain 4047).